Reading from the N-terminus, the 635-residue chain is 1-deoxy-D-xylulose-5-phosphate synthase (635 aa).

Thiamine diphosphate-binding positions include histidine 74 and 115 to 117; that span reads AHS. Aspartate 146 contributes to the Mg(2+) binding site. Residues 147 to 148, asparagine 176, tyrosine 283, and glutamate 365 each bind thiamine diphosphate; that span reads GA. Position 176 (asparagine 176) interacts with Mg(2+).

Belongs to the transketolase family. DXPS subfamily. Homodimer. Mg(2+) serves as cofactor. Requires thiamine diphosphate as cofactor.

It catalyses the reaction D-glyceraldehyde 3-phosphate + pyruvate + H(+) = 1-deoxy-D-xylulose 5-phosphate + CO2. Its pathway is metabolic intermediate biosynthesis; 1-deoxy-D-xylulose 5-phosphate biosynthesis; 1-deoxy-D-xylulose 5-phosphate from D-glyceraldehyde 3-phosphate and pyruvate: step 1/1. Catalyzes the acyloin condensation reaction between C atoms 2 and 3 of pyruvate and glyceraldehyde 3-phosphate to yield 1-deoxy-D-xylulose-5-phosphate (DXP). This Paraburkholderia xenovorans (strain LB400) protein is 1-deoxy-D-xylulose-5-phosphate synthase.